Consider the following 144-residue polypeptide: EF-hand calcium-binding domain-containing protein 8 (144 aa).

EF-hand domains are found at residues 52–86 (IHLA…VLSS) and 87–122 (VSDE…EFQG).

In Homo sapiens (Human), this protein is EF-hand calcium-binding domain-containing protein 8 (EFCAB8).